The primary structure comprises 383 residues: Dephospho-CoA kinase (383 aa).

The 199-residue stretch at 3–201 folds into the DPCK domain; sequence RIGLTGGMGA…RRLVPFERNL (199 aa). Residue 11–16 participates in ATP binding; the sequence is GAGKST. The tract at residues 196 to 383 is UPF0157; it reads PFERNLRAAT…EVAERLLGTV (188 aa).

It in the N-terminal section; belongs to the CoaE family. In the C-terminal section; belongs to the UPF0157 (GrpB) family.

It localises to the cytoplasm. The catalysed reaction is 3'-dephospho-CoA + ATP = ADP + CoA + H(+). It participates in cofactor biosynthesis; coenzyme A biosynthesis; CoA from (R)-pantothenate: step 5/5. In terms of biological role, catalyzes the phosphorylation of the 3'-hydroxyl group of dephosphocoenzyme A to form coenzyme A. This chain is Dephospho-CoA kinase, found in Nocardia farcinica (strain IFM 10152).